Here is a 210-residue protein sequence, read N- to C-terminus: Scoloptoxin SSD552 (210 aa).

The N-terminal stretch at 1 to 23 (MNILLSSTLFVLLMFQIIGSGMG) is a signal peptide.

In terms of processing, contains 3 disulfide bonds. In terms of tissue distribution, expressed by the venom gland.

Its subcellular location is the secreted. The chain is Scoloptoxin SSD552 from Scolopendra dehaani (Thai centipede).